The primary structure comprises 92 residues: Small ribosomal subunit protein uS19 (92 aa).

This sequence belongs to the universal ribosomal protein uS19 family.

Functionally, protein S19 forms a complex with S13 that binds strongly to the 16S ribosomal RNA. In Acidiphilium cryptum (strain JF-5), this protein is Small ribosomal subunit protein uS19.